Here is a 342-residue protein sequence, read N- to C-terminus: Holliday junction branch migration complex subunit RuvB (342 aa).

Residues 1–181 (MENRMVTPFD…FGMLCAMEFY (181 aa)) form a large ATPase domain (RuvB-L) region. Residues Leu20, Arg21, Gly62, Lys65, Thr66, Thr67, 128–130 (EDY), Arg171, Tyr181, and Arg218 contribute to the ATP site. Thr66 contributes to the Mg(2+) binding site. The small ATPAse domain (RuvB-S) stretch occupies residues 182–252 (TDEELMEIVV…GAKAALDLLE (71 aa)). Residues 255 to 342 (KEGLDKIDNK…KDNQVSIFNK (88 aa)) are head domain (RuvB-H). Arg310 and Arg315 together coordinate DNA.

The protein belongs to the RuvB family. Homohexamer. Forms an RuvA(8)-RuvB(12)-Holliday junction (HJ) complex. HJ DNA is sandwiched between 2 RuvA tetramers; dsDNA enters through RuvA and exits via RuvB. An RuvB hexamer assembles on each DNA strand where it exits the tetramer. Each RuvB hexamer is contacted by two RuvA subunits (via domain III) on 2 adjacent RuvB subunits; this complex drives branch migration. In the full resolvosome a probable DNA-RuvA(4)-RuvB(12)-RuvC(2) complex forms which resolves the HJ.

The protein resides in the cytoplasm. It catalyses the reaction ATP + H2O = ADP + phosphate + H(+). In terms of biological role, the RuvA-RuvB-RuvC complex processes Holliday junction (HJ) DNA during genetic recombination and DNA repair, while the RuvA-RuvB complex plays an important role in the rescue of blocked DNA replication forks via replication fork reversal (RFR). RuvA specifically binds to HJ cruciform DNA, conferring on it an open structure. The RuvB hexamer acts as an ATP-dependent pump, pulling dsDNA into and through the RuvAB complex. RuvB forms 2 homohexamers on either side of HJ DNA bound by 1 or 2 RuvA tetramers; 4 subunits per hexamer contact DNA at a time. Coordinated motions by a converter formed by DNA-disengaged RuvB subunits stimulates ATP hydrolysis and nucleotide exchange. Immobilization of the converter enables RuvB to convert the ATP-contained energy into a lever motion, pulling 2 nucleotides of DNA out of the RuvA tetramer per ATP hydrolyzed, thus driving DNA branch migration. The RuvB motors rotate together with the DNA substrate, which together with the progressing nucleotide cycle form the mechanistic basis for DNA recombination by continuous HJ branch migration. Branch migration allows RuvC to scan DNA until it finds its consensus sequence, where it cleaves and resolves cruciform DNA. In Clostridium botulinum (strain ATCC 19397 / Type A), this protein is Holliday junction branch migration complex subunit RuvB.